The primary structure comprises 408 residues: ORC1-type DNA replication protein 15 (408 aa).

ATP-binding positions include 60 to 64 (VGKTA), Tyr208, and Arg220.

It belongs to the CDC6/cdc18 family.

Involved in regulation of DNA replication. This is ORC1-type DNA replication protein 15 (cdc6o) from Haloarcula marismortui (strain ATCC 43049 / DSM 3752 / JCM 8966 / VKM B-1809) (Halobacterium marismortui).